Here is a 123-residue protein sequence, read N- to C-terminus: Non-specific lipid-transfer protein (123 aa).

An N-terminal signal peptide occupies residues 1–25; sequence MAVKKMVEAVFVVGLVVTMMNVWGA. Intrachain disulfides connect Cys-34/Cys-82, Cys-44/Cys-59, Cys-60/Cys-104, and Cys-80/Cys-119.

Belongs to the plant LTP family.

Plant non-specific lipid-transfer proteins transfer phospholipids as well as galactolipids across membranes. May play a role in wax or cutin deposition in the cell walls of expanding epidermal cells and certain secretory tissues. This is Non-specific lipid-transfer protein from Pinus taeda (Loblolly pine).